A 172-amino-acid chain; its full sequence is MSFLPQVMGAGVGFNAGTMLFQLVAMLILLALLKKYALGPLLNIMKEREDYITGEISSAEKKNEEAKKLIEEQQALLKEAREESQSLIENAKKLGEQQKDEIIKAARQEAERMKESARSEIVKERDQAVTALREQVASLSVMIASKVIEKELDEQAQEKLIQDYLKEVGESR.

A helical membrane pass occupies residues 12 to 32 (VGFNAGTMLFQLVAMLILLAL).

It belongs to the ATPase B chain family. As to quaternary structure, F-type ATPases have 2 components, F(1) - the catalytic core - and F(0) - the membrane proton channel. F(1) has five subunits: alpha(3), beta(3), gamma(1), delta(1), epsilon(1). F(0) has three main subunits: a(1), b(2) and c(10-14). The alpha and beta chains form an alternating ring which encloses part of the gamma chain. F(1) is attached to F(0) by a central stalk formed by the gamma and epsilon chains, while a peripheral stalk is formed by the delta and b chains.

Its subcellular location is the cell membrane. Its function is as follows. F(1)F(0) ATP synthase produces ATP from ADP in the presence of a proton or sodium gradient. F-type ATPases consist of two structural domains, F(1) containing the extramembraneous catalytic core and F(0) containing the membrane proton channel, linked together by a central stalk and a peripheral stalk. During catalysis, ATP synthesis in the catalytic domain of F(1) is coupled via a rotary mechanism of the central stalk subunits to proton translocation. Component of the F(0) channel, it forms part of the peripheral stalk, linking F(1) to F(0). The polypeptide is ATP synthase subunit b (Bacillus licheniformis (strain ATCC 14580 / DSM 13 / JCM 2505 / CCUG 7422 / NBRC 12200 / NCIMB 9375 / NCTC 10341 / NRRL NRS-1264 / Gibson 46)).